We begin with the raw amino-acid sequence, 198 residues long: Ribonuclease HII (198 aa).

The region spanning Gln10–Ser198 is the RNase H type-2 domain. 3 residues coordinate a divalent metal cation: Asp16, Glu17, and Asp108.

It belongs to the RNase HII family. Requires Mn(2+) as cofactor. Mg(2+) is required as a cofactor.

The protein resides in the cytoplasm. It catalyses the reaction Endonucleolytic cleavage to 5'-phosphomonoester.. Functionally, endonuclease that specifically degrades the RNA of RNA-DNA hybrids. In Shigella boydii serotype 4 (strain Sb227), this protein is Ribonuclease HII.